The chain runs to 742 residues: MGSENSALKSYTLREPPFTLPSGLAVYPAVLQDGKFASVFVYKRENEDKVNKAAKHLKTLRHPCLLRFLSCTVEADGIHLVTERVQPLEVALETLSSAEVCAGIYDILLALIFLHDRGHLTHNNVCLSSVFVSEDGHWKLGGMETVCKVSQATPEFLRSIQSIRDPASIPPEEMSPEFTTLPECHGHARDAFSFGTLVESLLTILNEQVSADVLSSFQQTLHSTLLNPIPKCRPALCTLLSHDFFRNDFLEVVNFLKSLTLKSEEEKTEFFKFLLDRVSCLSEELIASRLVPLLLNQLVFAEPVAVKSFLPYLLGPKKDHAQGETPCLLSPALFQSRVIPVLLQLFEVHEEHVRMVLLSHIEAYVEHFTQEQLKKVILPQVLLGLRDTSDSIVAITLHSLAVLVSLLGPEVVVGGERTKIFKRTAPSFTKNTDLSLEDSPMCVVCSHHSQISPILENPFSSIFPKCFFSGSTPINSKKHIQRDYYNTLLQTGDPFSQPIKFPINGLSDVKNTSEDSENFPSSSKKSEEWPDWSEPEEPENQTVNIQIWPREPCDDVKSQCTTLDVEESSWDDCEPSSLDTKVNPGGGITATKPVTSGEQKPIPALLSLTEESMPWKSSLPQKISLVQRGDDADQIEPPKVSSQERPLKVPSELGLGEEFTIQVKKKPVKDPEMDWFADMIPEIKPSAAFLILPELRTEMVPKKDDVSPVMQFSSKFAAAEITEGEAEGWEEEGELNWEDNNW.

Residue G2 is the site of N-myristoyl glycine attachment. In terms of domain architecture, Protein kinase spans 2–245 (GSENSALKSY…LCTLLSHDFF (244 aa)). 4 HEAT repeats span residues 199-238 (ESLL…ALCT), 285-323 (LIAS…HAQG), 333-370 (LFQS…HFTQ), and 372-409 (QLKK…LLGP). At S439 the chain carries Phosphoserine. 3 disordered regions span residues 506–544 (LSDV…QTVN), 568–598 (SSWD…TSGE), and 629–652 (GDDA…VPSE). Acidic residues predominate over residues 529 to 539 (WPDWSEPEEPE). The segment at 548–742 (WPREPCDDVK…GELNWEDNNW (195 aa)) is interaction with EZR. S707 is subject to Phosphoserine. Positions 723–742 (EGEAEGWEEEGELNWEDNNW) are disordered.

This sequence belongs to the protein kinase superfamily. As to quaternary structure, interacts with EZR/VIL2 C-terminal domain. Post-translationally, may be myristoylated; myristoylation may target it to Golgi compartment. Phosphorylated. In terms of tissue distribution, ubiquitously expressed.

The protein localises to the cytoplasm. It localises to the golgi apparatus. Its subcellular location is the cell projection. It is found in the lamellipodium. Its function is as follows. May play a role in regulating cell adhesion/migration complexes in migrating cells. This is Protein-associating with the carboxyl-terminal domain of ezrin (SCYL3) from Homo sapiens (Human).